Here is a 578-residue protein sequence, read N- to C-terminus: CTP synthase 2 (578 aa).

In terms of domain architecture, Glutamine amidotransferase type-1 spans 305-564; that stretch reads KIALVGKYTN…VAAASGTLGE (260 aa). Catalysis depends on for GATase activity residues Cys404, His537, and Glu539.

This sequence belongs to the CTP synthase family. As to quaternary structure, homodimer. Oligomerizes to a tetramer in the presence of its substrates UTP and ATP. The cofactor is Mg(2+).

It is found in the cytoplasm. The enzyme catalyses UTP + L-glutamine + ATP + H2O = CTP + L-glutamate + ADP + phosphate + 2 H(+). The protein operates within pyrimidine metabolism; CTP biosynthesis via de novo pathway; CTP from UDP: step 2/2. With respect to regulation, activated by GTP. Subject to allosteric product inhibition by CTP. Inhibited by p-chloromercuriphenylsulfonic acid, N-ethylmaleimide and cyclopentenylcytosine (CPEC). Its function is as follows. Catalyzes the ATP-dependent amination of UTP to CTP with either L-glutamine or ammonia as the source of nitrogen. Plays an important role in the regulation of phospholipid synthesis. This is CTP synthase 2 (URA8) from Saccharomyces cerevisiae (strain ATCC 204508 / S288c) (Baker's yeast).